An 845-amino-acid polypeptide reads, in one-letter code: Leucine--tRNA ligase (845 aa).

Positions 40-51 (PYPSGAGLHVGH) match the 'HIGH' region motif. The 'KMSKS' region signature appears at 623–627 (KMSKS). ATP is bound at residue K626.

Belongs to the class-I aminoacyl-tRNA synthetase family.

The protein resides in the cytoplasm. The enzyme catalyses tRNA(Leu) + L-leucine + ATP = L-leucyl-tRNA(Leu) + AMP + diphosphate. The polypeptide is Leucine--tRNA ligase (Protochlamydia amoebophila (strain UWE25)).